The chain runs to 251 residues: Adenylate kinase (251 aa).

Position 46-51 (46-51 (GAGKGT)) interacts with ATP. The interval 66-95 (ATGDMLRSQVQQQTPLGVEAKKIMDAGGLV) is NMP. AMP contacts are provided by residues threonine 67, arginine 72, 93-95 (GLV), 122-125 (GFPR), and glutamine 129. Residues 163-200 (GRLVHPASGRSYHKVFNPPKKEMIDDITGEALVQRSDD) are LID. ATP-binding positions include arginine 164 and 173–174 (SY). Arginine 197 and arginine 208 together coordinate AMP. Position 236 (glutamine 236) interacts with ATP.

This sequence belongs to the adenylate kinase family. AK2 subfamily. Monomer.

It localises to the cytoplasm. The protein localises to the cytosol. The protein resides in the mitochondrion intermembrane space. It carries out the reaction AMP + ATP = 2 ADP. Functionally, catalyzes the reversible transfer of the terminal phosphate group between ATP and AMP. Plays an important role in cellular energy homeostasis and in adenine nucleotide metabolism. Adenylate kinase activity is critical for regulation of the phosphate utilization and the AMP de novo biosynthesis pathways. This Yarrowia lipolytica (strain CLIB 122 / E 150) (Yeast) protein is Adenylate kinase.